A 117-amino-acid polypeptide reads, in one-letter code: Large ribosomal subunit protein uL18 (117 aa).

The protein belongs to the universal ribosomal protein uL18 family. Part of the 50S ribosomal subunit; part of the 5S rRNA/L5/L18/L25 subcomplex. Contacts the 5S and 23S rRNAs.

This is one of the proteins that bind and probably mediate the attachment of the 5S RNA into the large ribosomal subunit, where it forms part of the central protuberance. This chain is Large ribosomal subunit protein uL18, found in Glaesserella parasuis serovar 5 (strain SH0165) (Haemophilus parasuis).